A 182-amino-acid chain; its full sequence is UPF0397 protein BCG9842_B2659 (182 aa).

Transmembrane regions (helical) follow at residues 9–29 (VVAIGIGAALYGILGLWGFSI), 40–60 (AILTVFGALFGPVAGLLIGLI), 71–91 (WGIWWGWVISSGIIGFSMGLI), 114–134 (ITGLVGIVIAIIFAGAFDIIV), and 142–162 (IVIQVLGATISDVIVFLVLGL).

Belongs to the UPF0397 family.

It is found in the cell membrane. The sequence is that of UPF0397 protein BCG9842_B2659 from Bacillus cereus (strain G9842).